The chain runs to 346 residues: Elongation factor Ts (346 aa).

Residues 80–83 (TDFV) form an involved in Mg(2+) ion dislocation from EF-Tu region.

The protein belongs to the EF-Ts family.

It is found in the cytoplasm. Its function is as follows. Associates with the EF-Tu.GDP complex and induces the exchange of GDP to GTP. It remains bound to the aminoacyl-tRNA.EF-Tu.GTP complex up to the GTP hydrolysis stage on the ribosome. The chain is Elongation factor Ts (tsf) from Streptococcus pneumoniae (strain ATCC BAA-255 / R6).